The chain runs to 363 residues: 3-dehydroquinate synthase (363 aa).

NAD(+)-binding positions include 107–111 (GVIGD), 131–132 (TT), Lys144, and Lys153. The Zn(2+) site is built by Glu186, His251, and His268.

It belongs to the sugar phosphate cyclases superfamily. Dehydroquinate synthase family. It depends on Co(2+) as a cofactor. Zn(2+) serves as cofactor. The cofactor is NAD(+).

The protein localises to the cytoplasm. The catalysed reaction is 7-phospho-2-dehydro-3-deoxy-D-arabino-heptonate = 3-dehydroquinate + phosphate. It participates in metabolic intermediate biosynthesis; chorismate biosynthesis; chorismate from D-erythrose 4-phosphate and phosphoenolpyruvate: step 2/7. Functionally, catalyzes the conversion of 3-deoxy-D-arabino-heptulosonate 7-phosphate (DAHP) to dehydroquinate (DHQ). The protein is 3-dehydroquinate synthase of Nostoc punctiforme (strain ATCC 29133 / PCC 73102).